The primary structure comprises 396 residues: Initiation-specific alpha-1,6-mannosyltransferase (396 aa).

Over 1 to 7 (MLRLRLR) the chain is Cytoplasmic. Residues 8 to 28 (SIVIGAAIAGSILLLFNHGSI) form a helical; Signal-anchor for type II membrane protein membrane-spanning segment. Over 29–396 (EGMEDLTEIS…HFFAGSWKDD (368 aa)) the chain is Lumenal. Positions 229 to 231 (DID) match the DXD motif motif. The N-linked (GlcNAc...) asparagine glycan is linked to N345.

It belongs to the glycosyltransferase 32 family. Requires Mn(2+) as cofactor.

The protein resides in the endoplasmic reticulum membrane. Its subcellular location is the golgi apparatus membrane. The catalysed reaction is Transfers an alpha-D-mannosyl residue from GDP-mannose into lipid-linked oligosaccharide, forming an alpha-(1-&gt;6)-D-mannosyl-D-mannose linkage.. Mannosyltransferase involved in outer chain elongation of asparagine-linked oligosaccharides of the type Man(9)GlcNAc(2). May otherwise add the first alpha-1,6-mannose to the Man(8)GlcNAc(2) core oligosaccharide from the ER. Represents the first enzymatic event required for synthesis of outer chain mannose linkages on yeast secretory proteins. The chain is Initiation-specific alpha-1,6-mannosyltransferase from Schizosaccharomyces pombe (strain 972 / ATCC 24843) (Fission yeast).